Reading from the N-terminus, the 110-residue chain is Large ribosomal subunit protein uL22 (110 aa).

This sequence belongs to the universal ribosomal protein uL22 family. Part of the 50S ribosomal subunit.

Functionally, this protein binds specifically to 23S rRNA; its binding is stimulated by other ribosomal proteins, e.g. L4, L17, and L20. It is important during the early stages of 50S assembly. It makes multiple contacts with different domains of the 23S rRNA in the assembled 50S subunit and ribosome. In terms of biological role, the globular domain of the protein is located near the polypeptide exit tunnel on the outside of the subunit, while an extended beta-hairpin is found that lines the wall of the exit tunnel in the center of the 70S ribosome. This chain is Large ribosomal subunit protein uL22, found in Pseudomonas aeruginosa (strain LESB58).